Here is a 287-residue protein sequence, read N- to C-terminus: 2-dehydro-3-deoxyphosphooctonate aldolase (287 aa).

Belongs to the KdsA family.

It localises to the cytoplasm. It carries out the reaction D-arabinose 5-phosphate + phosphoenolpyruvate + H2O = 3-deoxy-alpha-D-manno-2-octulosonate-8-phosphate + phosphate. The protein operates within carbohydrate biosynthesis; 3-deoxy-D-manno-octulosonate biosynthesis; 3-deoxy-D-manno-octulosonate from D-ribulose 5-phosphate: step 2/3. It participates in bacterial outer membrane biogenesis; lipopolysaccharide biosynthesis. This is 2-dehydro-3-deoxyphosphooctonate aldolase from Caulobacter vibrioides (strain ATCC 19089 / CIP 103742 / CB 15) (Caulobacter crescentus).